The chain runs to 73 residues: UPF0235 protein LA_1736 (73 aa).

It belongs to the UPF0235 family.

This is UPF0235 protein LA_1736 from Leptospira interrogans serogroup Icterohaemorrhagiae serovar Lai (strain 56601).